We begin with the raw amino-acid sequence, 114 residues long: Cytochrome c2 (114 aa).

Residue Q1 is modified to Pyrrolidone carboxylic acid. Positions 13, 16, 17, and 93 each coordinate heme c.

This sequence belongs to the cytochrome c family. In terms of processing, binds 1 heme c group covalently per subunit.

The protein resides in the periplasm. Functionally, cytochrome c2 is found mainly in purple, non-sulfur, photosynthetic bacteria where it functions as the electron donor to the oxidized bacteriochlorophyll in the photophosphorylation pathway. However, it may also have a role in the respiratory chain and is found in some non-photosynthetic bacteria. The sequence is that of Cytochrome c2 from Rhodopseudomonas palustris.